The sequence spans 526 residues: Fumitremorgin C synthase (526 aa).

Residues Leu4–Ile24 form a helical membrane-spanning segment. Cys443 provides a ligand contact to heme.

Belongs to the cytochrome P450 family. Heme is required as a cofactor.

The protein resides in the membrane. The enzyme catalyses tryprostatin A + reduced [NADPH--hemoprotein reductase] + O2 = fumitremorgin C + oxidized [NADPH--hemoprotein reductase] + 2 H2O + H(+). It functions in the pathway mycotoxin biosynthesis. Cytochrome P450 monooxygenase; part of the gene cluster that mediates the biosynthesis of fumitremorgins, indole alkaloids that carry not only intriguing chemical structures, but also interesting biological and pharmacological activities. The biosynthesis of fumitremorgin-type alkaloids begins by condensation of the two amino acids L-tryptophan and L-proline to brevianamide F, catalyzed by the non-ribosomal peptide synthetase ftmA. Brevianamide F is then prenylated by the prenyltransferase ftmPT1/ftmB in the presence of dimethylallyl diphosphate, resulting in the formation of tryprostatin B. The three cytochrome P450 monooxygenases, ftmP450-1/ftmC, ftmP450-2/ftmE and ftmP450-3/FtmG, are responsible for the conversion of tryprostatin B to 6-hydroxytryprostatin B, tryprostatin A to fumitremorgin C and fumitremorgin C to 12,13-dihydroxyfumitremorgin C, respectively. The putative methyltransferase ftmMT/ftmD is expected for the conversion of 6-hydroxytryprostatin B to tryprostatin A. FtmPT2/FtmH catalyzes the prenylation of 12,13-dihydroxyfumitre-morgin C in the presence of dimethylallyl diphosphate, resulting in the formation of fumitremorgin B. Fumitremorgin B is further converted to verruculogen by ftmOx1/ftmF via the insertion of an endoperoxide bond between the two prenyl moieties. In some fungal species, verruculogen is further converted to fumitremorgin A, but the enzymes involved in this step have not been identified yet. In Aspergillus fumigatus (Neosartorya fumigata), this protein is Fumitremorgin C synthase.